The sequence spans 147 residues: Large ribosomal subunit protein bL9 (147 aa).

The interval V44–L63 is disordered. Basic and acidic residues predominate over residues D48 to L63.

Belongs to the bacterial ribosomal protein bL9 family.

In terms of biological role, binds to the 23S rRNA. This chain is Large ribosomal subunit protein bL9, found in Brevibacillus brevis (strain 47 / JCM 6285 / NBRC 100599).